A 1416-amino-acid chain; its full sequence is Gag-Pro-Pol polyprotein (1416 aa).

Gly-2 carries N-myristoyl glycine; by host lipidation. The PPXY motif motif lies at 100-103 (PPPY). 2 CCHC-type zinc fingers span residues 345-362 (GPCY…DCPT) and 370-387 (GPCP…DCPT). The region spanning 447–525 (ALMLVDTGAE…DKWQILGRDV (79 aa)) is the Peptidase A2 domain. The active-site Protease; shared with dimeric partner is the Asp-452. The region spanning 586 to 776 (LEAGYISPWD…SPVPFLGQMV (191 aa)) is the Reverse transcriptase domain. Asp-652, Asp-727, Asp-728, Asp-1005, Glu-1036, Asp-1057, Asp-1118, Asp-1190, and Asp-1247 together coordinate Mg(2+). In terms of domain architecture, RNase H type-1 spans 996 to 1126 (IPAALCLFSD…VDQLLPLETP (131 aa)). The 165-residue stretch at 1179-1343 (RGWAPNHIWQ…SPPLAVISEG (165 aa)) folds into the Integrase catalytic domain. The segment at residues 1352-1400 (KLFLYKLPGQNNRRWLGPLPALVEASGGALLATNPPVWVPWRLLKAFKC) is a DNA-binding region (integrase-type).

It belongs to the retroviral Pol polyprotein family. In terms of assembly, homodimer; the homodimers are part of the immature particles. Interacts with human TSG101 and NEDD4; these interactions are essential for budding and release of viral particles. Homodimer; further assembles as homohexamers. Requires Mg(2+) as cofactor. Post-translationally, phosphorylation of the matrix protein p15 by MAPK1 seems to play a role in budding. Myristoylated. Myristoylation of the matrix (MA) domain mediates the transport and binding of Gag polyproteins to the host plasma membrane and is required for the assembly of viral particles. In terms of processing, specific enzymatic cleavages by the viral protease yield mature proteins. The polyprotein is cleaved during and after budding, this process is termed maturation. The protease is autoproteolytically processed at its N- and C-termini.

The protein resides in the virion. The catalysed reaction is Endonucleolytic cleavage to 5'-phosphomonoester.. The enzyme catalyses DNA(n) + a 2'-deoxyribonucleoside 5'-triphosphate = DNA(n+1) + diphosphate. In terms of biological role, the matrix domain targets Gag, Gag-Pro and Gag-Pro-Pol polyproteins to the plasma membrane via a multipartite membrane binding signal, that includes its myristoylated N-terminus. Functionally, matrix protein. Its function is as follows. Forms the spherical core of the virus that encapsulates the genomic RNA-nucleocapsid complex. Binds strongly to viral nucleic acids and promote their aggregation. Also destabilizes the nucleic acids duplexes via highly structured zinc-binding motifs. In terms of biological role, the aspartyl protease mediates proteolytic cleavages of Gag and Gag-Pol polyproteins during or shortly after the release of the virion from the plasma membrane. Cleavages take place as an ordered, step-wise cascade to yield mature proteins. This process is called maturation. Displays maximal activity during the budding process just prior to particle release from the cell. Functionally, RT is a multifunctional enzyme that converts the viral RNA genome into dsDNA in the cytoplasm, shortly after virus entry into the cell. This enzyme displays a DNA polymerase activity that can copy either DNA or RNA templates, and a ribonuclease H (RNase H) activity that cleaves the RNA strand of RNA-DNA heteroduplexes in a partially processive 3' to 5'-endonucleasic mode. Conversion of viral genomic RNA into dsDNA requires many steps. A tRNA-Pro binds to the primer-binding site (PBS) situated at the 5'-end of the viral RNA. RT uses the 3' end of the tRNA primer to perform a short round of RNA-dependent minus-strand DNA synthesis. The reading proceeds through the U5 region and ends after the repeated (R) region which is present at both ends of viral RNA. The portion of the RNA-DNA heteroduplex is digested by the RNase H, resulting in a ssDNA product attached to the tRNA primer. This ssDNA/tRNA hybridizes with the identical R region situated at the 3' end of viral RNA. This template exchange, known as minus-strand DNA strong stop transfer, can be either intra- or intermolecular. RT uses the 3' end of this newly synthesized short ssDNA to perform the RNA-dependent minus-strand DNA synthesis of the whole template. RNase H digests the RNA template except for a polypurine tract (PPT) situated at the 5' end of the genome. It is not clear if both polymerase and RNase H activities are simultaneous. RNase H probably can proceed both in a polymerase-dependent (RNA cut into small fragments by the same RT performing DNA synthesis) and a polymerase-independent mode (cleavage of remaining RNA fragments by free RTs). Secondly, RT performs DNA-directed plus-strand DNA synthesis using the PPT that has not been removed by RNase H as primer. PPT and tRNA primers are then removed by RNase H. The 3' and 5' ssDNA PBS regions hybridize to form a circular dsDNA intermediate. Strand displacement synthesis by RT to the PBS and PPT ends produces a blunt ended, linear dsDNA copy of the viral genome that includes long terminal repeats (LTRs) at both ends. Its function is as follows. Catalyzes viral DNA integration into the host chromosome, by performing a series of DNA cutting and joining reactions. The sequence is that of Gag-Pro-Pol polyprotein (pol) from Bos taurus (Bovine).